The primary structure comprises 134 residues: DNA-directed RNA polymerase subunit omega (134 aa).

This sequence belongs to the RNA polymerase subunit omega family. In terms of assembly, the RNAP catalytic core consists of 2 alpha, 1 beta, 1 beta' and 1 omega subunit. When a sigma factor is associated with the core the holoenzyme is formed, which can initiate transcription.

The enzyme catalyses RNA(n) + a ribonucleoside 5'-triphosphate = RNA(n+1) + diphosphate. Functionally, promotes RNA polymerase assembly. Latches the N- and C-terminal regions of the beta' subunit thereby facilitating its interaction with the beta and alpha subunits. The sequence is that of DNA-directed RNA polymerase subunit omega from Rhizobium johnstonii (strain DSM 114642 / LMG 32736 / 3841) (Rhizobium leguminosarum bv. viciae).